The following is a 401-amino-acid chain: Argininosuccinate synthase (401 aa).

An ATP-binding site is contributed by 8–16 (AYSGGLDTS). An L-citrulline-binding site is contributed by Tyr-86. ATP is bound at residue Gly-116. Residues Thr-118, Asn-122, and Asp-123 each coordinate L-aspartate. Asn-122 contributes to the L-citrulline binding site. Residues Arg-126, Ser-174, Glu-258, and Tyr-270 each contribute to the L-citrulline site.

It belongs to the argininosuccinate synthase family. Type 1 subfamily. In terms of assembly, homotetramer.

It localises to the cytoplasm. The catalysed reaction is L-citrulline + L-aspartate + ATP = 2-(N(omega)-L-arginino)succinate + AMP + diphosphate + H(+). Its pathway is amino-acid biosynthesis; L-arginine biosynthesis; L-arginine from L-ornithine and carbamoyl phosphate: step 2/3. In Acidothermus cellulolyticus (strain ATCC 43068 / DSM 8971 / 11B), this protein is Argininosuccinate synthase.